The following is a 261-amino-acid chain: Probable RNA-binding protein ARP1 (261 aa).

The RRM domain maps to 17–94 (TKVFVGGLAW…RRANCNLASL (78 aa)). A disordered region spans residues 96-122 (GRLRKSPTMTSPQQGPKNGNRATPPHV). Residues 102-116 (PTMTSPQQGPKNGNR) show a composition bias toward polar residues.

In terms of tissue distribution, expressed in vasculature of leaves, roots and siliques.

Its subcellular location is the nucleus. Its function is as follows. Probable RNA-binding protein involved in the regulation of abscisic acid (ABA) response during seed germination. May regulate transcript levels of several germination-responsive genes under ABA. The polypeptide is Probable RNA-binding protein ARP1 (Arabidopsis thaliana (Mouse-ear cress)).